Reading from the N-terminus, the 65-residue chain is Toxin Co52 (65 aa).

An LCN-type CS-alpha/beta domain is found at 2-65; sequence EDGYLVDKTG…PTWPLPNKTC (64 aa). Intrachain disulfides connect Cys12-Cys65, Cys16-Cys41, Cys25-Cys46, and Cys29-Cys48.

Expressed by the venom gland.

Its subcellular location is the secreted. Its function is as follows. Beta toxins bind voltage-independently at site-4 of sodium channels (Nav) and shift the voltage of activation toward more negative potentials thereby affecting sodium channel activation and promoting spontaneous and repetitive firing. Not toxic to mice, chicks, crickets or woodlice (at 5 ug). In Centruroides ornatus (Scorpion), this protein is Toxin Co52.